Reading from the N-terminus, the 154-residue chain is MSAAAGKTLADYKAPYPKPTSRQRRYVILLDPKGDNAELNDYKVELIPGRVKLLDGANHYFLGGKIEEKTIDGWGYPYYVVTLAEMAGTAMLPLGNAAHKKLRFVPLHTSSLYRYNSKLPIVVYVPKDGVLRYRIWTAKLSGRGKAKSIKAKEM.

It belongs to the protease inhibitor I11 (ecotin) family.

The polypeptide is Ecotin-like protein 2 (Leishmania braziliensis).